The chain runs to 95 residues: Basic phospholipase A2 (95 aa).

Residues Lys7 and Lys10 are each lipidated (N6-palmitoyl lysine). The Ca(2+) site is built by Tyr23, Gly25, and Gly27. Cystine bridges form between Cys24-Cys40, Cys39-Cys77, Cys46-Cys70, Cys53-Cys63, and Cys57-Cys68. His43 is an active-site residue. Residue Asp44 coordinates Ca(2+). Residue Asp71 is part of the active site.

In terms of assembly, monomer. Ca(2+) serves as cofactor. Expressed by the venom gland.

The protein localises to the secreted. The catalysed reaction is a 1,2-diacyl-sn-glycero-3-phosphocholine + H2O = a 1-acyl-sn-glycero-3-phosphocholine + a fatty acid + H(+). In terms of biological role, PLA2 catalyzes the calcium-dependent hydrolysis of the 2-acyl groups in 3-sn-phosphoglycerides. Induces local and systemic myotoxicity in an intramuscular mouse model. Induces local edema in a mouse footpad assay. Does not exhibit any anticoagulant effects. Does not mediate an antibacterial effect against Gram-negative and Gram-positive bacteria. The chain is Basic phospholipase A2 from Agkistrodon piscivorus leucostoma (Western cottonmouth).